The sequence spans 479 residues: Ammonium transporter Rh type C (479 aa).

Residues 1–9 (MAWNTNLRW) lie on the Cytoplasmic side of the membrane. A helical membrane pass occupies residues 10 to 30 (RLPLTCLLLQVAMVILFGVFV). Residues 31-60 (RYDFDADAHWWTERKHKNLSEVENEFYYRY) lie on the Extracellular side of the membrane. The N-linked (GlcNAc...) asparagine glycan is linked to Asn-48. The chain crosses the membrane as a helical span at residues 61 to 81 (PSFQDVHVMVFVGFGFLMTFL). Over 82–85 (QRYG) the chain is Cytoplasmic. A helical transmembrane segment spans residues 86 to 106 (FSAVGFNFLLAAFGIQWALLM). Residues 107–123 (QGWFHFLEGRYIVVGVE) lie on the Extracellular side of the membrane. The helical transmembrane segment at 124–144 (NLINADFCVASVCVAFGAVLG) threads the bilayer. Residues 145-148 (KVSP) are Cytoplasmic-facing. A helical membrane pass occupies residues 149 to 169 (IQLLIMTFFQVTLFAVNEFIL). Topologically, residues 170 to 177 (LNLLKVKD) are extracellular. A helical transmembrane segment spans residues 178-200 (AGGSMTIHTFYAYFELTVTRILY). The Cytoplasmic portion of the chain corresponds to 201–218 (RRNLEQSKERQSSAYQSD). Residues 219–239 (LFAMIGTLFLWMYWPSFNSAI) traverse the membrane as a helical segment. Over 240-250 (SYHGDSQHRAA) the chain is Extracellular. Residues 251–271 (INTYCSLAACVLTSVAVSSAL) form a helical membrane-spanning segment. Residues 272 to 281 (HKKGKLDMVH) lie on the Cytoplasmic side of the membrane. A helical transmembrane segment spans residues 282–302 (IQNATLAGGVAVGTTAEMMLM). Pro-303 is a topological domain (extracellular). A helical transmembrane segment spans residues 304-324 (YGALIIGFICGIISTLGFVYL). Over 325-345 (TPFLESRLHIQDTCGINNLHG) the chain is Cytoplasmic. A helical membrane pass occupies residues 346-366 (IPGIIGGIVGAVTAASASLEV). Residues 367–394 (YGKEGLVHSFDFQDFKRDWTARTQGKFQ) lie on the Extracellular side of the membrane. The chain crosses the membrane as a helical span at residues 395–415 (IYGLLVTLAMALMGGIIVGLI). The Cytoplasmic segment spans residues 416 to 479 (LRLPFWGQPS…PMASSVPLVP (64 aa)).

Belongs to the ammonium transporter (TC 2.A.49) family. Rh subfamily. As to quaternary structure, homotrimer. In terms of processing, N-glycosylated.

Its subcellular location is the apical cell membrane. It carries out the reaction NH4(+)(in) = NH4(+)(out). It catalyses the reaction methylamine(out) = methylamine(in). The catalysed reaction is CO2(out) = CO2(in). Functionally, ammonium transporter involved in the maintenance of acid-base homeostasis. Transports ammonium and its related derivative methylammonium across the plasma membrane of epithelial cells likely contributing to renal transepithelial ammonia transport and ammonia metabolism. Postulated to primarily mediate an electroneutral bidirectional transport of NH3 ammonia species according to a mechanism that implies interaction of an NH4(+) ion with acidic residues of the pore entry followed by dissociation of NH4(+) into NH3 and H(+). As a result NH3 transits through the central pore and is protonated on the extracellular side reforming NH4(+). May act as a CO2 channel providing for renal acid secretion. This chain is Ammonium transporter Rh type C (RHCG), found in Macaca mulatta (Rhesus macaque).